The primary structure comprises 529 residues: All-trans-zeta-carotene desaturase (529 aa).

Position 12–45 (12–45 (IVVGAGPGGLSAAINLAGQGFRVTVVEKDAVPGG)) interacts with FAD.

It belongs to the carotenoid/retinoid oxidoreductase family. FAD is required as a cofactor.

It carries out the reaction all-trans-zeta-carotene + 2 A = all-trans-lycopene + 2 AH2. The protein operates within carotenoid biosynthesis; lycopene biosynthesis. Dehydrogenates carotenes in the trans conformation: converts all-trans-zeta-carotene into all-trans-lycopene, one of the last dehydrogenation steps of lycopene biosynthesis. The chain is All-trans-zeta-carotene desaturase (carC) from Myxococcus xanthus.